The primary structure comprises 139 residues: Peptide methionine sulfoxide reductase MsrB (139 aa).

Residues 14-137 (DEEWRRELTP…NSISLDFQPE (124 aa)) form the MsrB domain. 4 residues coordinate Zn(2+): Cys-53, Cys-56, Cys-102, and Cys-105. Cys-126 functions as the Nucleophile in the catalytic mechanism.

Belongs to the MsrB Met sulfoxide reductase family. Requires Zn(2+) as cofactor.

The enzyme catalyses L-methionyl-[protein] + [thioredoxin]-disulfide + H2O = L-methionyl-(R)-S-oxide-[protein] + [thioredoxin]-dithiol. This Leifsonia xyli subsp. xyli (strain CTCB07) protein is Peptide methionine sulfoxide reductase MsrB.